A 429-amino-acid polypeptide reads, in one-letter code: UDP-N-acetylglucosamine 1-carboxyvinyltransferase (429 aa).

Lys-22 to Asn-23 serves as a coordination point for phosphoenolpyruvate. Residue Arg-102 participates in UDP-N-acetyl-alpha-D-glucosamine binding. The active-site Proton donor is the Cys-126. Cys-126 bears the 2-(S-cysteinyl)pyruvic acid O-phosphothioketal mark. Residues Arg-131 to Leu-135, Asp-316, and Ile-338 contribute to the UDP-N-acetyl-alpha-D-glucosamine site.

This sequence belongs to the EPSP synthase family. MurA subfamily.

The protein localises to the cytoplasm. The enzyme catalyses phosphoenolpyruvate + UDP-N-acetyl-alpha-D-glucosamine = UDP-N-acetyl-3-O-(1-carboxyvinyl)-alpha-D-glucosamine + phosphate. It participates in cell wall biogenesis; peptidoglycan biosynthesis. Cell wall formation. Adds enolpyruvyl to UDP-N-acetylglucosamine. The polypeptide is UDP-N-acetylglucosamine 1-carboxyvinyltransferase (Methylocella silvestris (strain DSM 15510 / CIP 108128 / LMG 27833 / NCIMB 13906 / BL2)).